We begin with the raw amino-acid sequence, 119 residues long: UPF0342 protein GK0640 (119 aa).

This sequence belongs to the UPF0342 family.

This is UPF0342 protein GK0640 from Geobacillus kaustophilus (strain HTA426).